Reading from the N-terminus, the 561-residue chain is Sesquiterpene synthase 1 (561 aa).

Asp-313, Asp-317, Asp-458, and Glu-466 together coordinate Mg(2+). A DDXXD motif motif is present at residues 313–317; it reads DDIYD.

Belongs to the terpene synthase family. Tpsa subfamily. Mn(2+) serves as cofactor. The cofactor is Mg(2+).

It localises to the cytoplasm. It carries out the reaction (2E,6E)-farnesyl diphosphate = (1S,8aR)-delta-cadinene + diphosphate. It functions in the pathway secondary metabolite biosynthesis; terpenoid biosynthesis. Involved in the biosynthesis of delta-cadinene. This chain is Sesquiterpene synthase 1 (STS1), found in Thapsia garganica (Deadly carrot).